An 859-amino-acid chain; its full sequence is Rab effector MyRIP (859 aa).

One can recognise a RabBD domain in the interval 4–124; it reads KLDLSGLTDD…AQSLEWFYNN (121 aa). An FYVE-type zinc finger spans residues 63 to 105; it reads CCMRCCSPFTFLVNTKRQCGDCKFNVCKSCCSYQKHEKAWVCC. Positions 143–560 are myosin-binding; it reads RKHRLESGAC…LDTHQVSDDL (418 aa). The segment at 193-209 is PKA-binding; it reads VALRVAEEAIEEAISKA. A negative regulation of PKA-binding region spans residues 232–248; it reads LTEELATTILQKIIRKQ. Residues 251 to 285 are disordered; the sequence is KSEQQVEEEPGWPHPQSCSTKVADEGTSASPGGYR. Ser-298 carries the post-translational modification Phosphoserine. Disordered regions lie at residues 302–374, 386–629, and 783–812; these read EEAL…KPKS, VASA…SQSV, and DQKQ…KAEK. A compositionally biased stretch (basic and acidic residues) spans 316 to 326; that stretch reads QPRDQGQHPRA. Ser-350 is subject to Phosphoserine. Residues 393 to 403 are compositionally biased toward acidic residues; it reads MGSDSEEDFDW. The span at 435–450 shows a compositional bias: low complexity; sequence PIAASPSSALSPNPEA. Basic and acidic residues-rich tracts occupy residues 484–494 and 607–617; these read AAEKMRLHGEL and SEPKTESENQK. An actin-binding region spans residues 495-856; it reads DVNFNPQLAS…DLMEPALESA (362 aa). 2 stretches are compositionally biased toward polar residues: residues 618-629 and 787-796; these read ESLSSEDNSQSV and RTQVQTIDTS.

As to quaternary structure, binds MYO5A, MYO7A and F-actin. Binds RAB27A that has been activated by GTP-binding via its N-terminus. Interacts with PRKAR2A. Interacts with components of the exocyst complex, including EXOC3 and EXOC4. As to expression, detected in brain, skin, heart, adrenal medulla, pancreas, intestine, liver, kidney, muscle and testis.

Its subcellular location is the cytoplasm. The protein resides in the perinuclear region. It is found in the cytoplasmic vesicle. It localises to the secretory vesicle. In terms of biological role, rab effector protein involved in melanosome transport. Serves as link between melanosome-bound RAB27A and the motor proteins MYO5A and MYO7A. May link RAB27A-containing vesicles to actin filaments. Functions as a protein kinase A-anchoring protein (AKAP). May act as a scaffolding protein that links PKA to components of the exocytosis machinery, thus facilitating exocytosis, including insulin release. The chain is Rab effector MyRIP (MYRIP) from Homo sapiens (Human).